A 262-amino-acid polypeptide reads, in one-letter code: DNA-directed RNA polymerase subunit Rpo3 (262 aa).

This sequence belongs to the archaeal Rpo3/eukaryotic RPB3 RNA polymerase subunit family. Part of the RNA polymerase complex.

It is found in the cytoplasm. It carries out the reaction RNA(n) + a ribonucleoside 5'-triphosphate = RNA(n+1) + diphosphate. In terms of biological role, DNA-dependent RNA polymerase (RNAP) catalyzes the transcription of DNA into RNA using the four ribonucleoside triphosphates as substrates. The chain is DNA-directed RNA polymerase subunit Rpo3 from Pyrobaculum islandicum (strain DSM 4184 / JCM 9189 / GEO3).